The chain runs to 298 residues: Fe(II)/2-oxoglutarate-dependent dioxygenase nvfF (298 aa).

Fe cation contacts are provided by His137, Asp139, and His212.

This sequence belongs to the PhyH family. Homodimer. Fe cation is required as a cofactor.

It catalyses the reaction fumigatonoid C + 2-oxoglutarate + O2 = novofumigatonin + succinate + CO2 + H2O. It participates in secondary metabolite biosynthesis; terpenoid biosynthesis. Its function is as follows. Fe(II)/2-oxoglutarate-dependent dioxygenase; part of the gene cluster that mediates the biosynthesis of novofumigatonin, a heavily oxygenated meroterpenoid containing a unique orthoester moiety. The first step of the pathway is the synthesis of 3,5-dimethylorsellinic acid (DMOA) by the polyketide synthase nvfA via condensation of one acetyl-CoA starter unit with 3 malonyl-CoA units and 2 methylations. DMOA is then converted to farnesyl-DMOA by the farnesyltransferase nvfB. Epoxydation by FAD-dependent monooxygenase nvfK, followed by a protonation-initiated cyclization catalyzed by the terpene cyclase nvfL leads to the production of asnavolin H. The short chain dehydrogenase nvfC then as a 3-OH dehydrogenase of asnovolin H to yield chemesin D. There are two branches to synthesize asnovolin A from chemesin D. In one branch, chemesin D undergoes Baeyer-Villiger oxidation by nvfH, methylation by nvfJ, and enoyl reduction by the nvfM D enoylreductase that reduces the double bond between C-5'and C-6', to form respectively asnovolin I, asnovolin K, and asnovolin A. In the other branch, the methylation precedes the Baeyer-Villiger oxidation and the enoyl reduction to yield asnovolin A via the asnovolin J intermediate. Asnovolin A is further converted to fumigatonoid A by the Fe(II)/2-oxoglutarate-dependent dioxygenase nvfI that catalyzes an endoperoxidation reaction. The alpha/beta hydrolase nvfD then acts as an epimerase that converts fumigatonoid A to its C-5' epimer, which then undergoes spontaneous or nvfD-catalyzed lactonization. The following step utilizes the ketoreductase nvfG to produce fumigatonoid B. The dioxygenase nvfE further converts fumigatonoid B into fumigatonoid C. Finally the Fe(II)/2-oxoglutarate-dependent dioxygenase nvfF catalyzes two rounds of oxidation to transform fumigatonoid C into the end product, novofumigatonin A. This chain is Fe(II)/2-oxoglutarate-dependent dioxygenase nvfF, found in Aspergillus novofumigatus (strain IBT 16806).